Reading from the N-terminus, the 330-residue chain is MKQVVYTASPESQQIHAWQLNNEGALTLLQVVDAPGQVQPMVVSPDKSFLYVGVRPDFRVVAYQIDAEGKLKEAGHAPLPGSPTHISTDRQGRFIFVGSYNDACVSVTPIGENGLPGEPLQVVKGLEGCHSANIDLNNQTLFVPALKQDRIALFSLDKQGKLTPRAQAEVKTRSGAGPRHMAFHPNQRYAYSVNELDSSVDVWDISGDEVKKVQSVDALPEGFSDTRWAADIHITPDGRHLYSCDRTASNITIFSISAEGSSLKVEGYQPTETQPRGFNIDHSGQYLVAAGQKSHHIEVYKISADRGLLQPLARYAVGQGPMWVVINKLD.

Belongs to the cycloisomerase 2 family.

The enzyme catalyses 6-phospho-D-glucono-1,5-lactone + H2O = 6-phospho-D-gluconate + H(+). Its pathway is carbohydrate degradation; pentose phosphate pathway; D-ribulose 5-phosphate from D-glucose 6-phosphate (oxidative stage): step 2/3. Functionally, catalyzes the hydrolysis of 6-phosphogluconolactone to 6-phosphogluconate. The chain is 6-phosphogluconolactonase from Erwinia tasmaniensis (strain DSM 17950 / CFBP 7177 / CIP 109463 / NCPPB 4357 / Et1/99).